Reading from the N-terminus, the 457-residue chain is tRNA-2-methylthio-N(6)-dimethylallyladenosine synthase (457 aa).

The MTTase N-terminal domain maps to 8-123 (KKVFIKTFGC…LPEMLARRDA (116 aa)). [4Fe-4S] cluster contacts are provided by C17, C54, C86, C160, C164, and C167. In terms of domain architecture, Radical SAM core spans 146-379 (RVDGATAFVS…QEAIEANGRR (234 aa)). Residues 382 to 449 (QSRVGTVQRI…PHSLRGEVLL (68 aa)) form the TRAM domain.

Belongs to the methylthiotransferase family. MiaB subfamily. Monomer. Requires [4Fe-4S] cluster as cofactor.

Its subcellular location is the cytoplasm. It catalyses the reaction N(6)-dimethylallyladenosine(37) in tRNA + (sulfur carrier)-SH + AH2 + 2 S-adenosyl-L-methionine = 2-methylsulfanyl-N(6)-dimethylallyladenosine(37) in tRNA + (sulfur carrier)-H + 5'-deoxyadenosine + L-methionine + A + S-adenosyl-L-homocysteine + 2 H(+). Its function is as follows. Catalyzes the methylthiolation of N6-(dimethylallyl)adenosine (i(6)A), leading to the formation of 2-methylthio-N6-(dimethylallyl)adenosine (ms(2)i(6)A) at position 37 in tRNAs that read codons beginning with uridine. This chain is tRNA-2-methylthio-N(6)-dimethylallyladenosine synthase, found in Methylibium petroleiphilum (strain ATCC BAA-1232 / LMG 22953 / PM1).